The primary structure comprises 328 residues: Tryptophan--tRNA ligase (328 aa).

Residues 11-13 (QPT) and 19-20 (GN) each bind ATP. A 'HIGH' region motif is present at residues 12–20 (PTGNIHLGN). L-tryptophan is bound at residue Asp135. Residues 147–149 (GED), Ile186, and 195–199 (KMSKS) each bind ATP. The 'KMSKS' region motif lies at 195 to 199 (KMSKS).

Belongs to the class-I aminoacyl-tRNA synthetase family. As to quaternary structure, homodimer.

It localises to the cytoplasm. The catalysed reaction is tRNA(Trp) + L-tryptophan + ATP = L-tryptophyl-tRNA(Trp) + AMP + diphosphate + H(+). Functionally, catalyzes the attachment of tryptophan to tRNA(Trp). In Wolinella succinogenes (strain ATCC 29543 / DSM 1740 / CCUG 13145 / JCM 31913 / LMG 7466 / NCTC 11488 / FDC 602W) (Vibrio succinogenes), this protein is Tryptophan--tRNA ligase.